The chain runs to 310 residues: Basic salivary proline-rich protein 4 (310 aa).

Positions 1-16 (MLLILLSVALLALSSA) are cleaved as a signal peptide. The tract at residues 14 to 310 (SSAESSSEDV…RPAQGQQPPQ (297 aa)) is disordered. Repeat copies occupy residues 35 to 55 (KPEGRRPQGGNQPQRPPPPPG), 56 to 76 (KPQGPPPQGGNQSQGPPPPPG), 77 to 97 (KPEGRPPQGGNQSQGPPPHPG), 98 to 118 (KPERPPPQGGNQSQGPPPHPG), 119 to 139 (KPESRPPQGGHQSQGPPPTPG), 140 to 160 (KPEGPPPQGGNQSQGTPPPPG), 161 to 181 (KPEGRPPQGGNQSQGPPPHPG), 182 to 202 (KPERPPPQGGNQSHRPPPPPG), and 203 to 223 (KPERPPPQGGNQSQGPPPHPG). Positions 35-234 (KPEGRRPQGG…PEGPPPQEGN (200 aa)) are 9.5 X 21 AA tandem repeats of K-P-[EQ]-[GR]-[PR]-[PR]-P-Q-G-G-N-Q-[PS]-[QH]-[RG]-[PT]-P-P-[PH]-P-G. The segment covering 48 to 63 (QRPPPPPGKPQGPPPQ) has biased composition (pro residues). N-linked (GlcNAc...) asparagine glycans are attached at residues Asn66, Asn87, and Asn108. Over residues 133–147 (GPPPTPGKPEGPPPQ) the composition is skewed to pro residues. Residues Asn150, Asn171, and Asn192 are each glycosylated (N-linked (GlcNAc...) asparagine). Pro residues predominate over residues 196-210 (RPPPPPGKPERPPPQ). An N-linked (GlcNAc...) asparagine glycan is attached at Asn213. Residues 217 to 231 (GPPPHPGKPEGPPPQ) are compositionally biased toward pro residues. The 10; truncated repeat unit spans residues 224-234 (KPEGPPPQEGN). An N-linked (GlcNAc...) asparagine glycan is attached at Asn234. Residues 258 to 310 (QGPPPPGKPQGPPPAGGNPQQPQAPPAGKPQGPPPPPQGGRPPRPAQGQQPPQ) show a composition bias toward pro residues.

Post-translationally, N-glycosylated. Proteolytically cleaved at the tripeptide Xaa-Pro-Gln, where Xaa in the P(3) position is mostly lysine. The endoprotease may be of microbial origin. Pyroglutamate formation found on at least Gln-46, Gln-48, Gln-67, Gln-88; Gln-90; Gln-193; Gln-288 Gln-214 and Gln-295, preferentially in diabetic, and head and neck cancer patients.

Its subcellular location is the secreted. In Homo sapiens (Human), this protein is Basic salivary proline-rich protein 4 (PRB4).